A 574-amino-acid chain; its full sequence is Kelch-like protein 35 (574 aa).

A BTB domain is found at threonine 40 to alanine 110. Positions serine 146–glutamate 248 constitute a BACK domain. Kelch repeat units lie at residues valine 292–asparagine 341, isoleucine 343–glycine 385, glutamine 386–glycine 432, leucine 434–aspartate 480, threonine 481–glycine 522, and valine 524–glutamine 570.

This is Kelch-like protein 35 (Klhl35) from Mus musculus (Mouse).